A 133-amino-acid chain; its full sequence is Large ribosomal subunit protein bL12 (133 aa).

The protein belongs to the bacterial ribosomal protein bL12 family. Homodimer. Part of the ribosomal stalk of the 50S ribosomal subunit. Forms a multimeric L10(L12)X complex, where L10 forms an elongated spine to which 2 to 4 L12 dimers bind in a sequential fashion. Binds GTP-bound translation factors.

Forms part of the ribosomal stalk which helps the ribosome interact with GTP-bound translation factors. Is thus essential for accurate translation. In Ehrlichia chaffeensis (strain ATCC CRL-10679 / Arkansas), this protein is Large ribosomal subunit protein bL12.